The following is a 72-amino-acid chain: Small ribosomal subunit protein bS18 (72 aa).

It belongs to the bacterial ribosomal protein bS18 family. In terms of assembly, part of the 30S ribosomal subunit. Forms a tight heterodimer with protein bS6.

Binds as a heterodimer with protein bS6 to the central domain of the 16S rRNA, where it helps stabilize the platform of the 30S subunit. This chain is Small ribosomal subunit protein bS18, found in Fusobacterium nucleatum subsp. nucleatum (strain ATCC 25586 / DSM 15643 / BCRC 10681 / CIP 101130 / JCM 8532 / KCTC 2640 / LMG 13131 / VPI 4355).